The following is a 445-amino-acid chain: Acyl-CoA Delta-4 desaturase (445 aa).

In terms of domain architecture, Cytochrome b5 heme-binding spans 19–96 (AGVYTWEEVQ…MKPLLVGELA (78 aa)). 4 helical membrane-spanning segments follow: residues 132-152 (LFFL…LLMV), 153-173 (WHWG…ATAQ), 266-286 (YFFL…NIMM), and 307-327 (YMLC…MMFA).

This sequence belongs to the fatty acid desaturase type 1 family.

It is found in the membrane. The catalysed reaction is (8Z,11Z,14Z,17Z)-eicosatetraenoyl-CoA + 2 Fe(II)-[cytochrome b5] + O2 + 2 H(+) = (5Z,8Z,11Z,14Z,17Z)-eicosapentaenoyl-CoA + 2 Fe(III)-[cytochrome b5] + 2 H2O. It carries out the reaction (7Z,10Z,13Z,16Z)-docosatetraenoyl-CoA + 2 Fe(II)-[cytochrome b5] + O2 + 2 H(+) = (4Z,7Z,10Z,13Z,16Z)-docosapentaenoyl-CoA + 2 Fe(III)-[cytochrome b5] + 2 H2O. The enzyme catalyses (7Z,10Z,13Z,16Z,19Z)-docosapentaenoyl-CoA + 2 Fe(II)-[cytochrome b5] + O2 + 2 H(+) = (4Z,7Z,10Z,13Z,16Z,19Z)-docosahexaenoyl-CoA + 2 Fe(III)-[cytochrome b5] + 2 H2O. It participates in lipid metabolism; polyunsaturated fatty acid biosynthesis. In terms of biological role, fatty acid desaturase with bifunctional delta-4 and delta-5 activities. Component of a lipid metabolic pathway that catalyzes the biosynthesis of polyunsaturated fatty acids (PUFA) with preference toward n-3 substrates and Delta(4)function. In Siganus canaliculatus (White-spotted spinefoot), this protein is Acyl-CoA Delta-4 desaturase.